The chain runs to 249 residues: 3-deoxy-D-manno-octulosonic acid kinase (249 aa).

The active site involves aspartate 175.

The protein belongs to the protein kinase superfamily. KdkA/RfaP family.

The protein resides in the cell inner membrane. The enzyme catalyses an alpha-Kdo-(2-&gt;6)-lipid IVA + ATP = a 4-O-phospho-alpha-Kdo-(2-&gt;6)-lipid IVA + ADP + H(+). Its pathway is bacterial outer membrane biogenesis; LPS core biosynthesis. Its function is as follows. Catalyzes the ATP-dependent phosphorylation of the 3-deoxy-D-manno-octulosonic acid (Kdo) residue in Kdo-lipid IV(A) at the 4-OH position. This is 3-deoxy-D-manno-octulosonic acid kinase from Xanthomonas axonopodis pv. citri (strain 306).